We begin with the raw amino-acid sequence, 734 residues long: Amino-acid acetyltransferase, mitochondrial (734 aa).

A disordered region spans residues 384–433 (YSETSSRSTRAEADSNFNLRDDIPLSSFTEQKSGELEYSPRHQNDSPTQQ). Basic and acidic residues-rich tracts occupy residues 392-406 (TRAEADSNFNLRDDI) and 415-427 (KSGELEYSPRHQN). Residues 555–724 (GVPQISLTDP…YEAVCKTIEP (170 aa)) form the N-acetyltransferase domain.

Belongs to the acetyltransferase family.

It localises to the mitochondrion. The catalysed reaction is L-glutamate + acetyl-CoA = N-acetyl-L-glutamate + CoA + H(+). It functions in the pathway amino-acid biosynthesis; L-arginine biosynthesis; N(2)-acetyl-L-ornithine from L-glutamate: step 1/4. Its function is as follows. N-acetylglutamate synthase involved in arginine biosynthesis. The sequence is that of Amino-acid acetyltransferase, mitochondrial (arg2) from Botryotinia fuckeliana (strain B05.10) (Noble rot fungus).